Here is a 553-residue protein sequence, read N- to C-terminus: Putative transport protein YidE (553 aa).

5 consecutive transmembrane segments (helical) span residues 4–24, 28–48, 65–85, 95–115, and 158–178; these read IALT…IGNV, GVGL…HFVS, FGLI…FFAS, LFAV…HKLF, and MSYA…MWML. 2 RCK C-terminal domains span residues 191–276 and 279–361; these read QQHE…VIGQ and DTSL…VLGN. A run of 6 helical transmembrane segments spans residues 371 to 391, 393 to 413, 439 to 459, 464 to 484, 493 to 513, and 533 to 553; these read MLPV…PVFV, GFPA…ALIL, IVLF…HTLV, LSWI…VGIL, YLTM…LAFA, and LVMF…WSIG.

Belongs to the AAE transporter (TC 2.A.81) family. YidE subfamily.

The protein localises to the cell membrane. This chain is Putative transport protein YidE, found in Escherichia coli O6:H1 (strain CFT073 / ATCC 700928 / UPEC).